The following is a 366-amino-acid chain: UDP-N-acetylglucosamine--N-acetylmuramyl-(pentapeptide) pyrophosphoryl-undecaprenol N-acetylglucosamine transferase (366 aa).

UDP-N-acetyl-alpha-D-glucosamine-binding positions include 14 to 16, Asn-125, Arg-168, Ser-196, and Gln-297; that span reads TGG.

This sequence belongs to the glycosyltransferase 28 family. MurG subfamily.

It is found in the cell inner membrane. The enzyme catalyses di-trans,octa-cis-undecaprenyl diphospho-N-acetyl-alpha-D-muramoyl-L-alanyl-D-glutamyl-meso-2,6-diaminopimeloyl-D-alanyl-D-alanine + UDP-N-acetyl-alpha-D-glucosamine = di-trans,octa-cis-undecaprenyl diphospho-[N-acetyl-alpha-D-glucosaminyl-(1-&gt;4)]-N-acetyl-alpha-D-muramoyl-L-alanyl-D-glutamyl-meso-2,6-diaminopimeloyl-D-alanyl-D-alanine + UDP + H(+). It functions in the pathway cell wall biogenesis; peptidoglycan biosynthesis. Functionally, cell wall formation. Catalyzes the transfer of a GlcNAc subunit on undecaprenyl-pyrophosphoryl-MurNAc-pentapeptide (lipid intermediate I) to form undecaprenyl-pyrophosphoryl-MurNAc-(pentapeptide)GlcNAc (lipid intermediate II). The chain is UDP-N-acetylglucosamine--N-acetylmuramyl-(pentapeptide) pyrophosphoryl-undecaprenol N-acetylglucosamine transferase from Bradyrhizobium diazoefficiens (strain JCM 10833 / BCRC 13528 / IAM 13628 / NBRC 14792 / USDA 110).